Consider the following 272-residue polypeptide: L-aminoadipate-semialdehyde dehydrogenase-phosphopantetheinyl transferase (272 aa).

Belongs to the P-Pant transferase superfamily. AcpS family.

The enzyme catalyses apo-[ACP] + CoA = holo-[ACP] + adenosine 3',5'-bisphosphate + H(+). In terms of biological role, catalyzes the transfer of a 4'-phosphopantetheine moiety from coenzyme A to a serine residue of acceptor proteins, such as alpha-aminoadipate reductase. Necessary for alpha-aminoadipate reductase activity. This is L-aminoadipate-semialdehyde dehydrogenase-phosphopantetheinyl transferase from Saccharomyces cerevisiae (strain ATCC 204508 / S288c) (Baker's yeast).